A 229-amino-acid polypeptide reads, in one-letter code: MANELTWHDVLAEEKQQPYFLNTLQTVASERQSGVTIYPPQKDVFNAFRFTELGDVKVVILGQDPYHGPGQAHGLAFSVRPGIAIPPSLLNMYKELENTIPGFTRPNHGYLESWARQGVLLLNTVLTVRAGQAHSHASLGWETFTDKVISLINQHREGVVFLLWGSHAQKKGAIIDKQRHHVLKAPHPSPLSAHRGFFGCNHFVLANQWLEQRGETPIDWMPVLPAESE.

Aspartate 64 (proton acceptor) is an active-site residue.

Belongs to the uracil-DNA glycosylase (UDG) superfamily. UNG family.

It is found in the cytoplasm. The enzyme catalyses Hydrolyzes single-stranded DNA or mismatched double-stranded DNA and polynucleotides, releasing free uracil.. In terms of biological role, excises uracil residues from the DNA which can arise as a result of misincorporation of dUMP residues by DNA polymerase or due to deamination of cytosine. The sequence is that of Uracil-DNA glycosylase from Escherichia coli (strain 55989 / EAEC).